A 552-amino-acid chain; its full sequence is 2-methyl-1,2-propanediol dehydrogenase (552 aa).

The protein belongs to the GMC oxidoreductase family. FAD is required as a cofactor.

It is found in the cytoplasm. It catalyses the reaction 2-methylpropane-1,2-diol + NAD(+) = 2-hydroxy-2-methylpropanal + NADH + H(+). Its function is as follows. Involved in the degradation of methyl tert-butyl ether (MTBE). Catalyzes the conversion of 2-methyl 1,2-propanediol (2-M1,2-PD) to hydroxyisobutyraldehyde. The protein is 2-methyl-1,2-propanediol dehydrogenase of Mycolicibacterium austroafricanum (Mycobacterium austroafricanum).